The following is a 241-amino-acid chain: Protein TraL (241 aa).

To plasmid R751 TraL.

This chain is Protein TraL (traL), found in Escherichia coli.